The chain runs to 347 residues: Large ribosomal subunit protein uL3 (347 aa).

It belongs to the universal ribosomal protein uL3 family. In terms of assembly, part of the 50S ribosomal subunit. Forms a cluster with proteins L14 and L24e.

In terms of biological role, one of the primary rRNA binding proteins, it binds directly near the 3'-end of the 23S rRNA, where it nucleates assembly of the 50S subunit. The sequence is that of Large ribosomal subunit protein uL3 from Caldivirga maquilingensis (strain ATCC 700844 / DSM 13496 / JCM 10307 / IC-167).